The chain runs to 130 residues: Small ribosomal subunit protein uS11 (130 aa).

Belongs to the universal ribosomal protein uS11 family. In terms of assembly, part of the 30S ribosomal subunit. Interacts with proteins S7 and S18. Binds to IF-3.

Functionally, located on the platform of the 30S subunit, it bridges several disparate RNA helices of the 16S rRNA. Forms part of the Shine-Dalgarno cleft in the 70S ribosome. This is Small ribosomal subunit protein uS11 from Synechococcus sp. (strain CC9605).